A 319-amino-acid polypeptide reads, in one-letter code: Cytochrome f (319 aa).

The N-terminal stretch at 1–35 (MQKKDVCEYITKWVSVTISTLVTIGVLVFPLSSEA) is a signal peptide. Heme contacts are provided by tyrosine 36, cysteine 56, cysteine 59, and histidine 60. Residues 285–305 (IQGLLVFFASVVLAQIFLVLK) traverse the membrane as a helical segment.

It belongs to the cytochrome f family. As to quaternary structure, the 4 large subunits of the cytochrome b6-f complex are cytochrome b6, subunit IV (17 kDa polypeptide, petD), cytochrome f and the Rieske protein, while the 4 small subunits are PetG, PetL, PetM and PetN. The complex functions as a dimer. Heme serves as cofactor.

It localises to the plastid. The protein localises to the chloroplast thylakoid membrane. Its function is as follows. Component of the cytochrome b6-f complex, which mediates electron transfer between photosystem II (PSII) and photosystem I (PSI), cyclic electron flow around PSI, and state transitions. The sequence is that of Cytochrome f from Zygnema circumcarinatum (Green alga).